We begin with the raw amino-acid sequence, 350 residues long: Phospho-2-dehydro-3-deoxyheptonate aldolase, Phe-sensitive (350 aa).

N6-acetyllysine is present on Lys244.

Belongs to the class-I DAHP synthase family. In terms of assembly, homotetramer.

It catalyses the reaction D-erythrose 4-phosphate + phosphoenolpyruvate + H2O = 7-phospho-2-dehydro-3-deoxy-D-arabino-heptonate + phosphate. The protein operates within metabolic intermediate biosynthesis; chorismate biosynthesis; chorismate from D-erythrose 4-phosphate and phosphoenolpyruvate: step 1/7. Stereospecific condensation of phosphoenolpyruvate (PEP) and D-erythrose-4-phosphate (E4P) giving rise to 3-deoxy-D-arabino-heptulosonate-7-phosphate (DAHP). This chain is Phospho-2-dehydro-3-deoxyheptonate aldolase, Phe-sensitive (aroG), found in Escherichia coli O157:H7.